We begin with the raw amino-acid sequence, 130 residues long: MAKQSVVKTKKRVKRVITDGVAHICASFNNTIVTITDRQGNSLFWCTSGASGFRGSRKCTPFAAQVAAEKAGRAVLDYGMKSLEVRINGPGPGRESAVRSLSNVGYKITNIIDVTPIPHNGCRPPKKRRV.

It belongs to the universal ribosomal protein uS11 family. As to quaternary structure, part of the 30S ribosomal subunit. Interacts with proteins S7 and S18. Binds to IF-3.

In terms of biological role, located on the platform of the 30S subunit, it bridges several disparate RNA helices of the 16S rRNA. Forms part of the Shine-Dalgarno cleft in the 70S ribosome. This Xylella fastidiosa (strain M12) protein is Small ribosomal subunit protein uS11.